A 345-amino-acid chain; its full sequence is UDP-3-O-acylglucosamine N-acyltransferase (345 aa).

Histidine 252 functions as the Proton acceptor in the catalytic mechanism.

This sequence belongs to the transferase hexapeptide repeat family. LpxD subfamily. Homotrimer.

It carries out the reaction a UDP-3-O-[(3R)-3-hydroxyacyl]-alpha-D-glucosamine + a (3R)-hydroxyacyl-[ACP] = a UDP-2-N,3-O-bis[(3R)-3-hydroxyacyl]-alpha-D-glucosamine + holo-[ACP] + H(+). It participates in bacterial outer membrane biogenesis; LPS lipid A biosynthesis. In terms of biological role, catalyzes the N-acylation of UDP-3-O-acylglucosamine using 3-hydroxyacyl-ACP as the acyl donor. Is involved in the biosynthesis of lipid A, a phosphorylated glycolipid that anchors the lipopolysaccharide to the outer membrane of the cell. The chain is UDP-3-O-acylglucosamine N-acyltransferase from Rickettsia rickettsii.